Consider the following 278-residue polypeptide: Rhamnulose-1-phosphate aldolase (278 aa).

The active site involves Glu116. His139, His141, and His210 together coordinate Zn(2+).

This sequence belongs to the aldolase class II family. RhaD subfamily. It depends on Zn(2+) as a cofactor.

Its subcellular location is the cytoplasm. The enzyme catalyses L-rhamnulose 1-phosphate = (S)-lactaldehyde + dihydroxyacetone phosphate. It functions in the pathway carbohydrate degradation; L-rhamnose degradation; glycerone phosphate from L-rhamnose: step 3/3. Functionally, catalyzes the reversible cleavage of L-rhamnulose-1-phosphate to dihydroxyacetone phosphate (DHAP) and L-lactaldehyde. This Listeria welshimeri serovar 6b (strain ATCC 35897 / DSM 20650 / CCUG 15529 / CIP 8149 / NCTC 11857 / SLCC 5334 / V8) protein is Rhamnulose-1-phosphate aldolase.